A 300-amino-acid chain; its full sequence is UDP-3-O-acyl-N-acetylglucosamine deacetylase (300 aa).

The Zn(2+) site is built by His78, His237, and Asp241. Catalysis depends on His264, which acts as the Proton donor.

It belongs to the LpxC family. The cofactor is Zn(2+).

The enzyme catalyses a UDP-3-O-[(3R)-3-hydroxyacyl]-N-acetyl-alpha-D-glucosamine + H2O = a UDP-3-O-[(3R)-3-hydroxyacyl]-alpha-D-glucosamine + acetate. The protein operates within glycolipid biosynthesis; lipid IV(A) biosynthesis; lipid IV(A) from (3R)-3-hydroxytetradecanoyl-[acyl-carrier-protein] and UDP-N-acetyl-alpha-D-glucosamine: step 2/6. Its function is as follows. Catalyzes the hydrolysis of UDP-3-O-myristoyl-N-acetylglucosamine to form UDP-3-O-myristoylglucosamine and acetate, the committed step in lipid A biosynthesis. The protein is UDP-3-O-acyl-N-acetylglucosamine deacetylase of Acinetobacter baumannii (strain SDF).